We begin with the raw amino-acid sequence, 357 residues long: Trans-enoyl reductase resD (357 aa).

Tyr-211 contributes to the NADP(+) binding site.

The protein belongs to the zinc-containing alcohol dehydrogenase family.

The protein operates within antifungal biosynthesis. In terms of biological role, trans-enoyl reductase; part of the gene cluster that mediates the biosynthesis of the tetrahydropyranyl antifungal agent restricticin that acts as an inhibitor of CYP51 and blocks the ergosterol biosynthesis. The highly reducing polyketide synthase resH, the short chain dehydrogenase resG, the cyclase resF, the FAD-dependent monooxygenase resA and the enoylreductase resD are required to generate the first stable intermediate desmethylrestrictinol. ResH with resD biosynthesize the first polyketide chain intermediate that is reduced by resG, followed by epoxidation by resA before 6-endo cyclization via epoxide opening by resF leads to desmethylrestrictinol. The methyltransferase resE then catalyzes the C4 O-methylation of desmethylrestrictinol to produce restrictinol, and the nonribosomal peptide synthetase resC catalyzes the C3 esterification of restrictinol with glycine that leads to restricticin. In Aspergillus sclerotiorum, this protein is Trans-enoyl reductase resD.